The following is a 197-amino-acid chain: Holliday junction branch migration complex subunit RuvA (197 aa).

The tract at residues 1–65 is domain I; it reads MISQVRGTIM…EDAWHLYGFA (65 aa). The domain II stretch occupies residues 66 to 140; that stretch reads HAYERAVFQK…DKIDAVGPAP (75 aa). Residues 140-144 are flexible linker; the sequence is PATGT. Positions 145-197 are domain III; that stretch reads APSPLGDDAVRALIALGYNQTEADRAVRAVVESGAPKDVSSLVRGALSRLTAK.

This sequence belongs to the RuvA family. As to quaternary structure, homotetramer. Forms an RuvA(8)-RuvB(12)-Holliday junction (HJ) complex. HJ DNA is sandwiched between 2 RuvA tetramers; dsDNA enters through RuvA and exits via RuvB. An RuvB hexamer assembles on each DNA strand where it exits the tetramer. Each RuvB hexamer is contacted by two RuvA subunits (via domain III) on 2 adjacent RuvB subunits; this complex drives branch migration. In the full resolvosome a probable DNA-RuvA(4)-RuvB(12)-RuvC(2) complex forms which resolves the HJ.

It localises to the cytoplasm. The RuvA-RuvB-RuvC complex processes Holliday junction (HJ) DNA during genetic recombination and DNA repair, while the RuvA-RuvB complex plays an important role in the rescue of blocked DNA replication forks via replication fork reversal (RFR). RuvA specifically binds to HJ cruciform DNA, conferring on it an open structure. The RuvB hexamer acts as an ATP-dependent pump, pulling dsDNA into and through the RuvAB complex. HJ branch migration allows RuvC to scan DNA until it finds its consensus sequence, where it cleaves and resolves the cruciform DNA. The polypeptide is Holliday junction branch migration complex subunit RuvA (Gemmatimonas aurantiaca (strain DSM 14586 / JCM 11422 / NBRC 100505 / T-27)).